We begin with the raw amino-acid sequence, 168 residues long: Transcription elongation factor GreB (168 aa).

It belongs to the GreA/GreB family. GreB subfamily.

Necessary for efficient RNA polymerase transcription elongation past template-encoded arresting sites. The arresting sites in DNA have the property of trapping a certain fraction of elongating RNA polymerases that pass through, resulting in locked ternary complexes. Cleavage of the nascent transcript by cleavage factors such as GreA or GreB allows the resumption of elongation from the new 3'terminus. GreB releases sequences of up to 9 nucleotides in length. The polypeptide is Transcription elongation factor GreB (Xanthomonas axonopodis pv. citri (strain 306)).